The following is a 176-amino-acid chain: Pituitary adenylate cyclase-activating polypeptide (176 aa).

Positions 1–24 (MTMCSGARLALLVYGILMHSSVYG) are cleaved as a signal peptide. The propeptide occupies 25–80 (SPAASGLRFPGIRPENEAYDEDGNPQQDFYDSEPPGVGSPASALRDAYALYYPAEE). Disordered regions lie at residues 36-62 (IRPE…PGVG) and 115-134 (GTPG…RHSD). The interval 150–158 (VKKYLAAVL) is important for receptor binding. Leucine 158 bears the Leucine amide mark. Position 169 is a lysine amide (lysine 169). The propeptide occupies 173–176 (IPYL).

The protein belongs to the glucagon family.

It localises to the secreted. PACAP is a neuropeptide involved in diverse array of physiological processes through activating the PACAP subfamily of class B1 G protein-coupled receptors: VIP receptor 1 (VIPR1), VIP receptor 2 (VIPR2), and PACAP type I receptor (ADCYAP1R1). Exerts neuroprotective and general cytoprotective effects due to anti-apoptotic, anti-inflammatory, and antioxidant actions. Promotes neuron projection development through the RAPGEF2/Rap1/B-Raf/ERK pathway. In chromaffin cells, induces long-lasting increase of intracellular calcium concentrations and neuroendocrine secretion. Involved in the control of glucose homeostasis, induces insulin secretion by pancreatic beta cells. PACAP exists in two bioactive forms from proteolysis of the same precursor protein, PACAP27 and PACAP38, which differ by eleven amino acid residues in the C-terminus. The protein is Pituitary adenylate cyclase-activating polypeptide (ADCYAP1) of Ovis aries (Sheep).